A 103-amino-acid chain; its full sequence is N(4)-acetylcytidine amidohydrolase (103 aa).

Positions 6 to 101 constitute an ASCH domain; that stretch reads ITFFQRFQDD…QTQFYVIEFK (96 aa). Lysine 21 functions as the Proton acceptor in the catalytic mechanism. Catalysis depends on threonine 24, which acts as the Nucleophile. The active-site Proton donor is the glutamate 74.

Belongs to the N(4)-acetylcytidine amidohydrolase family.

The catalysed reaction is N(4)-acetylcytidine + H2O = cytidine + acetate + H(+). It catalyses the reaction N(4)-acetyl-2'-deoxycytidine + H2O = 2'-deoxycytidine + acetate + H(+). It carries out the reaction N(4)-acetylcytosine + H2O = cytosine + acetate + H(+). Its function is as follows. Catalyzes the hydrolysis of N(4)-acetylcytidine (ac4C). The protein is N(4)-acetylcytidine amidohydrolase (yqfB) of Escherichia coli O81 (strain ED1a).